Reading from the N-terminus, the 92-residue chain is Probable Fe(2+)-trafficking protein (92 aa).

It belongs to the Fe(2+)-trafficking protein family.

Functionally, could be a mediator in iron transactions between iron acquisition and iron-requiring processes, such as synthesis and/or repair of Fe-S clusters in biosynthetic enzymes. The protein is Probable Fe(2+)-trafficking protein of Xanthomonas campestris pv. campestris (strain 8004).